The chain runs to 476 residues: Tubulointerstitial nephritis antigen (476 aa).

Asn-38 is a glycosylation site (N-linked (GlcNAc...) asparagine). In terms of domain architecture, SMB spans 59-107 (RFGCCADRDDGCVTQFYEADALCYCDKFCERENSDCCPDYKSFCREEKG). Disulfide bonds link Cys-63–Cys-83 and Cys-87–Cys-94. N-linked (GlcNAc...) asparagine glycosylation is found at Asn-175, Asn-314, Asn-360, and Asn-455.

It belongs to the peptidase C1 family.

It localises to the secreted. The protein resides in the extracellular space. The protein localises to the extracellular matrix. Its subcellular location is the basement membrane. Functionally, mediates adhesion of proximal tubule epithelial cells via integrins alpha3-beta1 and alphaV-beta3. This is a non catalytic peptidase C1 family protein. This is Tubulointerstitial nephritis antigen (TINAG) from Bos taurus (Bovine).